The sequence spans 248 residues: MYKLVLIRHGESQWNLENRFTGWHDVDLTDTGVAQAKTAGQLLKDAGFTFDQAYTSVLLRAIKTLNIALEEMGQHYLPVERHWRLNERHYGALTGLDKAETAAKHGEEQVKIWRRSFDIPPPAVEDDSEHFPGHDPRYNNVDADILPRGESLKLTIERVLPYWHDVIRPDIQAGKRVIIAAHGNSLRALVKYLDGMSDEEVLGLNIPTGVPLVYELDENLKPISKEYLGDADAIKAMMDAVAKQGQAK.

Substrate is bound by residues 8–15 (RHGESQWN), 21–22 (TG), Arg-60, 87–90 (ERHY), Lys-98, 114–115 (RR), and 183–184 (GN). Residue His-9 is the Tele-phosphohistidine intermediate of the active site. The Proton donor/acceptor role is filled by Glu-87.

This sequence belongs to the phosphoglycerate mutase family. BPG-dependent PGAM subfamily. Homodimer.

The catalysed reaction is (2R)-2-phosphoglycerate = (2R)-3-phosphoglycerate. It participates in carbohydrate degradation; glycolysis; pyruvate from D-glyceraldehyde 3-phosphate: step 3/5. In terms of biological role, catalyzes the interconversion of 2-phosphoglycerate and 3-phosphoglycerate. This is 2,3-bisphosphoglycerate-dependent phosphoglycerate mutase from Alteromonas mediterranea (strain DSM 17117 / CIP 110805 / LMG 28347 / Deep ecotype).